The following is a 181-amino-acid chain: Nucleoside-triphosphatase THEP1 (181 aa).

ATP is bound by residues 12–19 (GPVGSIKS) and 104–111 (VIVIDEIG).

It belongs to the THEP1 NTPase family.

The enzyme catalyses a ribonucleoside 5'-triphosphate + H2O = a ribonucleoside 5'-diphosphate + phosphate + H(+). In terms of biological role, has nucleotide phosphatase activity towards ATP, GTP, CTP, TTP and UTP. May hydrolyze nucleoside diphosphates with lower efficiency. This Thermoplasma acidophilum (strain ATCC 25905 / DSM 1728 / JCM 9062 / NBRC 15155 / AMRC-C165) protein is Nucleoside-triphosphatase THEP1.